We begin with the raw amino-acid sequence, 130 residues long: MIYGIGTDICDVRRIRASLARHGDRFAEKVLADGELATWRARSARWPERGVRYLATRFSAKEAFSKAIGLGLHMPMTWRHCEVANLPSGQPTIVLHGALQDWFAARGLRCHLSVTDESDYAASFCVVEKD.

Mg(2+) contacts are provided by Asp8 and Glu62.

The protein belongs to the P-Pant transferase superfamily. AcpS family. Mg(2+) is required as a cofactor.

The protein resides in the cytoplasm. It carries out the reaction apo-[ACP] + CoA = holo-[ACP] + adenosine 3',5'-bisphosphate + H(+). Transfers the 4'-phosphopantetheine moiety from coenzyme A to a Ser of acyl-carrier-protein. The protein is Holo-[acyl-carrier-protein] synthase of Acidovorax ebreus (strain TPSY) (Diaphorobacter sp. (strain TPSY)).